The following is a 284-amino-acid chain: Bifunctional protein FolD (284 aa).

NADP(+)-binding positions include 166-168 and I232; that span reads GAS.

It belongs to the tetrahydrofolate dehydrogenase/cyclohydrolase family. In terms of assembly, homodimer.

It catalyses the reaction (6R)-5,10-methylene-5,6,7,8-tetrahydrofolate + NADP(+) = (6R)-5,10-methenyltetrahydrofolate + NADPH. The enzyme catalyses (6R)-5,10-methenyltetrahydrofolate + H2O = (6R)-10-formyltetrahydrofolate + H(+). It functions in the pathway one-carbon metabolism; tetrahydrofolate interconversion. Functionally, catalyzes the oxidation of 5,10-methylenetetrahydrofolate to 5,10-methenyltetrahydrofolate and then the hydrolysis of 5,10-methenyltetrahydrofolate to 10-formyltetrahydrofolate. This is Bifunctional protein FolD from Shewanella sp. (strain ANA-3).